Consider the following 479-residue polypeptide: Lincomycin resistance protein LmrB (479 aa).

Helical transmembrane passes span M19 to T41, W56 to W78, F85 to F107, R112 to F134, A141 to F160, W170 to M192, V205 to F222, W232 to F251, M272 to L294, L304 to V326, W338 to S355, T360 to M382, I403 to A425, and A449 to F471.

Belongs to the major facilitator superfamily. EmrB family.

The protein localises to the cell membrane. In terms of biological role, proton-dependent transporter. May mediate the efflux of lincomycin. In Bacillus subtilis (strain 168), this protein is Lincomycin resistance protein LmrB (lmrB).